We begin with the raw amino-acid sequence, 319 residues long: Secreted effector protein sopD2 (319 aa).

A Required to target late endocytic compartments motif is present at residues 37-44 (WDRFKDCF).

This sequence belongs to the SopD family.

It is found in the secreted. Its subcellular location is the host cell membrane. Effector proteins function to alter host cell physiology and promote bacterial survival in host tissues. Contributes to the formation of Salmonella-induced filaments (Sifs) in infected epithelial cells and to replication in macrophages. This Salmonella typhimurium (strain LT2 / SGSC1412 / ATCC 700720) protein is Secreted effector protein sopD2 (sopD2).